The chain runs to 210 residues: 3-hexulose-6-phosphate synthase (210 aa).

The protein belongs to the HPS/KGPDC family. HPS subfamily.

The catalysed reaction is D-ribulose 5-phosphate + formaldehyde = D-arabino-hex-3-ulose 6-phosphate. It participates in one-carbon metabolism; formaldehyde assimilation via RuMP pathway; D-fructose 6-phosphate from D-ribulose 5-phosphate and formaldehyde: step 1/2. Functionally, catalyzes the condensation of ribulose 5-phosphate with formaldehyde to form 3-hexulose 6-phosphate. The protein is 3-hexulose-6-phosphate synthase of Staphylococcus epidermidis (strain ATCC 12228 / FDA PCI 1200).